A 252-amino-acid chain; its full sequence is Imidazole glycerol phosphate synthase subunit HisF (252 aa).

Active-site residues include Asp-11 and Asp-130.

The protein belongs to the HisA/HisF family. As to quaternary structure, heterodimer of HisH and HisF.

It is found in the cytoplasm. It catalyses the reaction 5-[(5-phospho-1-deoxy-D-ribulos-1-ylimino)methylamino]-1-(5-phospho-beta-D-ribosyl)imidazole-4-carboxamide + L-glutamine = D-erythro-1-(imidazol-4-yl)glycerol 3-phosphate + 5-amino-1-(5-phospho-beta-D-ribosyl)imidazole-4-carboxamide + L-glutamate + H(+). It functions in the pathway amino-acid biosynthesis; L-histidine biosynthesis; L-histidine from 5-phospho-alpha-D-ribose 1-diphosphate: step 5/9. In terms of biological role, IGPS catalyzes the conversion of PRFAR and glutamine to IGP, AICAR and glutamate. The HisF subunit catalyzes the cyclization activity that produces IGP and AICAR from PRFAR using the ammonia provided by the HisH subunit. The polypeptide is Imidazole glycerol phosphate synthase subunit HisF (Lacticaseibacillus casei (strain BL23) (Lactobacillus casei)).